The sequence spans 225 residues: MSDVEEQYQEEQQPVVQEELQVVELATTIPLDVQEAQREVKLFNKWSFEDVEVKDVSLVDYIQIRNPVFVSHTAGKYASKRFRKAQCPIVERLTNSLMMNGRNNGKKLKAVRIVKHALEIIHVLTEQNPIQVVVDAIVNSGAREDSTRIGSSGTVRRQAVDVSPLRRVNQAIALLTIGAREASFRNIKTIAECLAEELINAAKGSSTSYAIKKKDELERVAKSNR.

The protein belongs to the universal ribosomal protein uS7 family. As to quaternary structure, component of the small ribosomal subunit. Mature ribosomes consist of a small (40S) and a large (60S) subunit. The 40S subunit contains about 32 different proteins and 1 molecule of RNA (18S). The 60S subunit contains 45 different proteins and 3 molecules of RNA (25S, 5.8S and 5S).

It localises to the cytoplasm. Component of the ribosome, a large ribonucleoprotein complex responsible for the synthesis of proteins in the cell. The small ribosomal subunit (SSU) binds messenger RNAs (mRNAs) and translates the encoded message by selecting cognate aminoacyl-transfer RNA (tRNA) molecules. The large subunit (LSU) contains the ribosomal catalytic site termed the peptidyl transferase center (PTC), which catalyzes the formation of peptide bonds, thereby polymerizing the amino acids delivered by tRNAs into a polypeptide chain. The nascent polypeptides leave the ribosome through a tunnel in the LSU and interact with protein factors that function in enzymatic processing, targeting, and the membrane insertion of nascent chains at the exit of the ribosomal tunnel. This chain is Small ribosomal subunit protein uS7 (RPS5), found in Candida albicans (strain SC5314 / ATCC MYA-2876) (Yeast).